The primary structure comprises 615 residues: Sodium-dependent noradrenaline transporter (615 aa).

The tract at residues 1-28 is disordered; the sequence is MLLARMNPQVQPENGGAGPGSEQPPRKR. Residues 1 to 60 are Cytoplasmic-facing; it reads MLLARMNPQVQPENGGAGPGSEQPPRKRKEVLVVKERNGVQCLLASRDGDEQPRETWGKK. The chain crosses the membrane as a helical span at residues 61–86; the sequence is IDFLLSVVGFAVDLANVWRFPYLCYK. The Na(+) site is built by Gly-69, Ala-71, and Val-72. Asp-73 provides a ligand contact to (R)-noradrenaline. A dopamine-binding site is contributed by Asp-73. Position 76 (Asn-76) interacts with Na(+). 2 residues coordinate (R)-noradrenaline: Tyr-85 and Lys-86. Residues 87–90 lie on the Extracellular side of the membrane; the sequence is NGGG. Residues 91–114 traverse the membrane as a helical segment; the sequence is AFLIPYTLFLIIAGMPLFYMELAL. Residues 115 to 133 are Cytoplasmic-facing; the sequence is GQYNREGAATVWKICPFFK. A helical membrane pass occupies residues 134-164; the sequence is GVGYAVILIALYVGFYYNVIIAWSLYYLFSS. 2 residues coordinate (R)-noradrenaline: Ala-143 and Gly-147. A dopamine-binding site is contributed by Ala-143. At 165–231 the chain is on the extracellular side; the sequence is FTPTLPWTDC…SSGIHDIGLP (67 aa). Cys-174 and Cys-183 are disulfide-bonded. 3 N-linked (GlcNAc...) asparagine glycosylation sites follow: Asn-182, Asn-190, and Asn-196. A helical membrane pass occupies residues 232–252; that stretch reads QWQLLLCLIIVVIVLFFSLWK. Residues 253–255 lie on the Cytoplasmic side of the membrane; that stretch reads GVK. The chain crosses the membrane as a helical span at residues 256–280; the sequence is TSGKVVWITATLPYLVLFVLLVHGI. The Extracellular portion of the chain corresponds to 281–304; that stretch reads TLPGASNGINAYLHIDFYRLKEAT. The chain crosses the membrane as a helical span at residues 305 to 330; sequence VWIDAATQIFFSLGAGFGVLIAFASY. (R)-noradrenaline is bound at residue Phe-315. Phe-315 is a binding site for dopamine. Ser-316 contributes to the Na(+) binding site. Topologically, residues 331 to 336 are cytoplasmic; the sequence is NKFDNN. A helical membrane pass occupies residues 337 to 360; sequence CYRDALLTSTINCVTSFISGFAIF. Asn-348 provides a ligand contact to Na(+). Residues 361 to 400 lie on the Extracellular side of the membrane; it reads SILGYMAHEHKVNIEDVATEGAGLVFILYPEAISTLSGST. Glu-380 is a binding site for (R)-noradrenaline. Glu-380 provides a ligand contact to dopamine. A helical membrane pass occupies residues 401-426; it reads FWAIVFFIMLLALGIDSSMGGMEAVI. 2 residues coordinate Na(+): Asp-416 and Ser-417. The Cytoplasmic segment spans residues 427-441; the sequence is TGLADDFQVLKRHRK. A helical transmembrane segment spans residues 442-462; sequence LFTFAVSFGTFLLALFCITKG. Residue Gly-463 is a topological domain, extracellular. Residues 464 to 490 traverse the membrane as a helical segment; that stretch reads IYVLTLLDTFAAGTSILFAVLMEAIGV. At 491 to 520 the chain is on the cytoplasmic side; that stretch reads SWFYGVDRFSNDIQQMMGFKPGLYWRLCWK. A helical transmembrane segment spans residues 521–543; the sequence is FVSPAFLLFVVIVSIINFKPLTY. At 544 to 546 the chain is on the extracellular side; sequence DDY. The helical transmembrane segment at 547–567 threads the bilayer; that stretch reads IFPLWANWVGWGIAGSSMVLV. The Cytoplasmic segment spans residues 568–615; sequence PAYIVYKFFSTRGSIRERLAYGITPASEHHLVAQRDIRQFQLQHWLAI.

Belongs to the sodium:neurotransmitter symporter (SNF) (TC 2.A.22) family. SLC6A2 subfamily. Monomer. Can form homodimers in the cell membrane; homodimerization is mostly mediated by cholesterol and lipids, and regulates neurotransmitter transport activity. Interacts with PRKCABP. In terms of processing, palmitoylated. Palmitoylation regulates protein levels and neurotransmitter transport.

The protein resides in the cell membrane. It localises to the cell projection. Its subcellular location is the axon. It is found in the synapse. The protein localises to the synaptosome. The catalysed reaction is (R)-noradrenaline(out) + chloride(out) + Na(+)(out) = (R)-noradrenaline(in) + chloride(in) + Na(+)(in). The enzyme catalyses dopamine(out) + chloride(out) + Na(+)(out) = dopamine(in) + chloride(in) + Na(+)(in). It catalyses the reaction dopamine(out) + chloride(out) + 2 Na(+)(out) = dopamine(in) + chloride(in) + 2 Na(+)(in). With respect to regulation, inhibited by nisoxetine, oxaprotiline and desipramin. In terms of biological role, mediates sodium- and chloride-dependent transport of norepinephrine (also known as noradrenaline), the primary signaling neurotransmitter in the autonomic sympathetic nervous system. Is responsible for norepinephrine re-uptake and clearance from the synaptic cleft, thus playing a crucial role in norepinephrine inactivation and homeostasis. Can also mediate sodium- and chloride-dependent transport of dopamine. This is Sodium-dependent noradrenaline transporter (SLC6A2) from Bos taurus (Bovine).